The primary structure comprises 303 residues: UPF0282 protein PAE3680 (303 aa).

This sequence belongs to the UPF0282 family.

This chain is UPF0282 protein PAE3680, found in Pyrobaculum aerophilum (strain ATCC 51768 / DSM 7523 / JCM 9630 / CIP 104966 / NBRC 100827 / IM2).